A 722-amino-acid chain; its full sequence is PAB1-binding protein 1 (722 aa).

Residues 1–10 (MKGNFRKRDS) are compositionally biased toward basic and acidic residues. Residues 1 to 38 (MKGNFRKRDSSTNSRKGGNSDSNYTNGGVPNQNNSSMF) form a disordered region. Positions 11–38 (STNSRKGGNSDSNYTNGGVPNQNNSSMF) are enriched in polar residues. A Sm domain is found at 51–107 (RQDYLLANSIGSDVTVTVTSGVKYTGLLVSCNLESTNGIDVVLRFPRVADSGVSDSV). S106 is subject to Phosphoserine. The residue at position 193 (T193) is a Phosphothreonine. S215 is modified (phosphoserine). Disordered stretches follow at residues 305–380 (ALKS…LSSK), 412–488 (SSTL…NPHT), and 683–722 (GSGPSGMPANGSAMHSHGHSRNYHQTSHHGHHNSSTSGHK). 4 stretches are compositionally biased toward low complexity: residues 307 to 316 (KSNSKPNSNK), 338 to 347 (SSSNSNKNEN), 356 to 370 (PAAAGAPEGKPPQKT), and 412 to 421 (SSTLKSNSSL). K344 is covalently cross-linked (Glycyl lysine isopeptide (Lys-Gly) (interchain with G-Cter in ubiquitin)). Residues 429–455 (TPSAKTVSPTTQISAGKSESRRSGSNI) are compositionally biased toward polar residues. Phosphoserine is present on S436. Low complexity predominate over residues 456-471 (SQGQSSTGHTTRSSTS). The segment covering 698-722 (SHGHSRNYHQTSHHGHHNSSTSGHK) has biased composition (basic residues).

The protein belongs to the ataxin-2 family. Interacts (via C-terminus) with MKT1 (via C-terminus). Interacts with FIR1, IGO1, LSM12, PBP4 and PAB1.

Its subcellular location is the cytoplasm. The protein resides in the nucleus. It localises to the mitochondrion. Functionally, involved in pre-mRNA polyadenylation. May act to repress the ability of PAB1 to negatively regulate polyadenylation. Negative regulator of poly(A) nuclease (PAN) activity. Promotes mating-type switching in mother cells by positively regulating HO mRNA translation. Localizes MKT1 to polysomes. The chain is PAB1-binding protein 1 (PBP1) from Saccharomyces cerevisiae (strain ATCC 204508 / S288c) (Baker's yeast).